A 260-amino-acid chain; its full sequence is Shikimate dehydrogenase (260 aa).

Catalysis depends on Lys-71, which acts as the Proton acceptor. 124–128 (GAGGA) is a binding site for NADP(+).

It belongs to the shikimate dehydrogenase family.

The enzyme catalyses shikimate + NADP(+) = 3-dehydroshikimate + NADPH + H(+). The protein operates within metabolic intermediate biosynthesis; chorismate biosynthesis; chorismate from D-erythrose 4-phosphate and phosphoenolpyruvate: step 4/7. The protein is Shikimate dehydrogenase (aroE) of Sulfurisphaera tokodaii (strain DSM 16993 / JCM 10545 / NBRC 100140 / 7) (Sulfolobus tokodaii).